Reading from the N-terminus, the 219-residue chain is UPF0173 metal-dependent hydrolase Mlab_1154 (219 aa).

The protein belongs to the UPF0173 family.

In Methanocorpusculum labreanum (strain ATCC 43576 / DSM 4855 / Z), this protein is UPF0173 metal-dependent hydrolase Mlab_1154.